Reading from the N-terminus, the 311-residue chain is MQAPPPEHCPGVESENAGKGSACSGCPNQGVCSDPNKKLEDPGKALVVESMKDVKHKLLILSGKGGVGKSTVTSLLTRYLARSNPDSNFGVLDIDICGPSQPRLMGALGESVHQSGYGWSPVGIEDNVCLMSIGFLLGSVDDAIIWRGPKKNGMIRQFLSEVDWGNLDLLLLDTPPGTSDEHLSVVSYLKDDTNPESLRAVMVTTPQEVSLLDVRKEINFCKKQNIPIVGVIENMSSFRCGHCGNTSEIFPAKTGGAVAMCAEMGIPLLGSLPLDQQISKACDSGEDLTTFKNVTSEALEGICSKIMASIS.

The tract at residues 1-20 (MQAPPPEHCPGVESENAGKG) is disordered. Cys-9, Cys-23, Cys-26, and Cys-32 together coordinate [4Fe-4S] cluster. ATP is bound at residue 63 to 70 (GKGGVGKS). 2 residues coordinate [4Fe-4S] cluster: Cys-240 and Cys-243.

This sequence belongs to the Mrp/NBP35 ATP-binding proteins family. NUBP1/NBP35 subfamily. Heterotetramer of 2 Nubp1 and 2 Nubp2 chains. It depends on [4Fe-4S] cluster as a cofactor.

It localises to the cytoplasm. In terms of biological role, component of the cytosolic iron-sulfur (Fe/S) protein assembly (CIA) machinery. Required for maturation of extramitochondrial Fe-S proteins. The Nubp1-Nubp2 heterotetramer forms a Fe-S scaffold complex, mediating the de novo assembly of an Fe-S cluster and its transfer to target apoproteins. In Drosophila simulans (Fruit fly), this protein is Cytosolic Fe-S cluster assembly factor Nubp1 homolog.